The primary structure comprises 66 residues: MKAADVRALSADQLKEELAKLKKEQFNLRFQKATGQLEKSSRIDEVRKDIARIKTIARQKAAEAKA.

The protein belongs to the universal ribosomal protein uL29 family.

In Sinorhizobium fredii (strain NBRC 101917 / NGR234), this protein is Large ribosomal subunit protein uL29.